The sequence spans 221 residues: Pectate lyase C (221 aa).

A signal peptide spans 1–28 (MKRLAGTVILSGLLVCGFGQALPEKALA).

This sequence belongs to the polysaccharide lyase 3 family. Ca(2+) is required as a cofactor.

The protein localises to the secreted. The catalysed reaction is Eliminative cleavage of (1-&gt;4)-alpha-D-galacturonan to give oligosaccharides with 4-deoxy-alpha-D-galact-4-enuronosyl groups at their non-reducing ends.. The enzyme catalyses Eliminative cleavage of (1-&gt;4)-alpha-D-galacturonan methyl ester to give oligosaccharides with 4-deoxy-6-O-methyl-alpha-D-galact-4-enuronosyl groups at their non-reducing ends.. It functions in the pathway glycan metabolism; pectin degradation; 2-dehydro-3-deoxy-D-gluconate from pectin: step 2/5. In terms of biological role, catalyzes the depolymerization of both polygalacturonate and pectins of methyl esterification degree from 22 to 89%, with an endo mode of action. In contrast to the majority of pectate lyases, displays high activity on highly methylated pectins. In Bacillus licheniformis (strain ATCC 14580 / DSM 13 / JCM 2505 / CCUG 7422 / NBRC 12200 / NCIMB 9375 / NCTC 10341 / NRRL NRS-1264 / Gibson 46), this protein is Pectate lyase C (pelC).